A 206-amino-acid polypeptide reads, in one-letter code: High frequency lysogenization protein HflD homolog (206 aa).

Belongs to the HflD family.

The protein localises to the cytoplasm. The protein resides in the cell inner membrane. This Pseudomonas syringae pv. syringae (strain B728a) protein is High frequency lysogenization protein HflD homolog.